We begin with the raw amino-acid sequence, 168 residues long: MKLILRADVENLGSLGDVVDVKPGYGRNFLLPQGLAMVASQANLKVFEQERKKLQAHMDALRAEAQDMQARLEALDVVITMHVGDNDKLYGSVTTTIIGDAIAALGVDVDRRRILMDAPIRTLGEHPVRVRLHPSVIALVPVKVVSDHQSFEEEPAPEAPAEEAEAAE.

The tract at residues 149–168 (QSFEEEPAPEAPAEEAEAAE) is disordered. The span at 152 to 168 (EEEPAPEAPAEEAEAAE) shows a compositional bias: acidic residues.

It belongs to the bacterial ribosomal protein bL9 family.

Functionally, binds to the 23S rRNA. This chain is Large ribosomal subunit protein bL9, found in Desulfovibrio desulfuricans (strain ATCC 27774 / DSM 6949 / MB).